We begin with the raw amino-acid sequence, 209 residues long: Ribonuclease HII (209 aa).

Residues 18-209 form the RNase H type-2 domain; sequence GLVAGVDEVG…FKPVKALLER (192 aa). The a divalent metal cation site is built by Asp24, Glu25, and Asp116.

It belongs to the RNase HII family. It depends on Mn(2+) as a cofactor. Requires Mg(2+) as cofactor.

The protein resides in the cytoplasm. It catalyses the reaction Endonucleolytic cleavage to 5'-phosphomonoester.. In terms of biological role, endonuclease that specifically degrades the RNA of RNA-DNA hybrids. The chain is Ribonuclease HII from Shewanella sp. (strain MR-7).